Reading from the N-terminus, the 201-residue chain is FMN-dependent NADH:quinone oxidoreductase (201 aa).

92-95 (MWNL) lines the FMN pocket.

It belongs to the azoreductase type 1 family. As to quaternary structure, homodimer. The cofactor is FMN.

It carries out the reaction 2 a quinone + NADH + H(+) = 2 a 1,4-benzosemiquinone + NAD(+). The catalysed reaction is N,N-dimethyl-1,4-phenylenediamine + anthranilate + 2 NAD(+) = 2-(4-dimethylaminophenyl)diazenylbenzoate + 2 NADH + 2 H(+). Its function is as follows. Quinone reductase that provides resistance to thiol-specific stress caused by electrophilic quinones. Also exhibits azoreductase activity. Catalyzes the reductive cleavage of the azo bond in aromatic azo compounds to the corresponding amines. The polypeptide is FMN-dependent NADH:quinone oxidoreductase (Caldicellulosiruptor saccharolyticus (strain ATCC 43494 / DSM 8903 / Tp8T 6331)).